The sequence spans 332 residues: Ubiquinol oxidase 1a, mitochondrial (332 aa).

The N-terminal 54 residues, methionine 1–methionine 54, are a transit peptide targeting the mitochondrion. The helical transmembrane segment at alanine 157–leucine 177 threads the bilayer. Fe cation-binding residues include glutamate 161, glutamate 200, and histidine 203. The chain crosses the membrane as a helical span at residues alanine 219 to serine 239. Fe cation-binding residues include glutamate 251, glutamate 302, and histidine 305.

Belongs to the alternative oxidase family. As to quaternary structure, homodimer; disulfide-linked. The cofactor is Fe cation. Expressed in roots, leaf sheaths and leaf blades.

Its subcellular location is the mitochondrion inner membrane. The enzyme catalyses 2 a ubiquinol + O2 = 2 a ubiquinone + 2 H2O. Functionally, catalyzes the cyanide-resistant oxidation of ubiquinol and the reduction of molecular oxygen to water, but does not translocate protons and consequently is not linked to oxidative phosphorylation. May increase respiration when the cytochrome respiratory pathway is restricted, or in response to low temperatures. In Oryza sativa subsp. japonica (Rice), this protein is Ubiquinol oxidase 1a, mitochondrial.